The following is a 246-amino-acid chain: UDP-N-acetyl-D-mannosaminuronic acid transferase (246 aa).

It belongs to the glycosyltransferase 26 family.

The catalysed reaction is UDP-N-acetyl-alpha-D-mannosaminouronate + N-acetyl-alpha-D-glucosaminyl-di-trans,octa-cis-undecaprenyl diphosphate = beta-D-ManNAcA-(1-&gt;4)-alpha-D-GlcNAc-di-trans,octa-cis-undecaprenyl diphosphate + UDP + H(+). It participates in bacterial outer membrane biogenesis; enterobacterial common antigen biosynthesis. Its function is as follows. Catalyzes the synthesis of Und-PP-GlcNAc-ManNAcA (Lipid II), the second lipid-linked intermediate involved in enterobacterial common antigen (ECA) synthesis. In Salmonella schwarzengrund (strain CVM19633), this protein is UDP-N-acetyl-D-mannosaminuronic acid transferase.